Consider the following 86-residue polypeptide: Small ribosomal subunit protein bS16 (86 aa).

It belongs to the bacterial ribosomal protein bS16 family.

The chain is Small ribosomal subunit protein bS16 from Carboxydothermus hydrogenoformans (strain ATCC BAA-161 / DSM 6008 / Z-2901).